Here is a 348-residue protein sequence, read N- to C-terminus: GTPase Obg (348 aa).

The region spanning 1–159 is the Obg domain; the sequence is MKFLDLAKVY…RTIWLRLKLI (159 aa). The 168-residue stretch at 160–327 folds into the OBG-type G domain; sequence ADAGLLGLPN…VLRAVRAEID (168 aa). GTP contacts are provided by residues 166–173, 191–195, 212–215, 279–282, and 308–310; these read GLPNAGKS, FTTLH, DIPG, NKID, and SSV. S173 and T193 together coordinate Mg(2+).

The protein belongs to the TRAFAC class OBG-HflX-like GTPase superfamily. OBG GTPase family. In terms of assembly, monomer. Mg(2+) is required as a cofactor.

The protein localises to the cytoplasm. Functionally, an essential GTPase which binds GTP, GDP and possibly (p)ppGpp with moderate affinity, with high nucleotide exchange rates and a fairly low GTP hydrolysis rate. Plays a role in control of the cell cycle, stress response, ribosome biogenesis and in those bacteria that undergo differentiation, in morphogenesis control. This chain is GTPase Obg, found in Ruegeria sp. (strain TM1040) (Silicibacter sp.).